Reading from the N-terminus, the 81-residue chain is Gamma-conotoxin-like TeA53 (81 aa).

Residues Met-1–Ala-19 form the signal peptide. The propeptide occupies Leu-20 to Arg-42. Disulfide bonds link Cys-49-Cys-63, Cys-56-Cys-67, and Cys-62-Cys-72.

It belongs to the conotoxin O2 superfamily. In terms of tissue distribution, expressed by the venom duct.

It localises to the secreted. Its function is as follows. Gamma-conotoxins may act on voltage-gated non-specific cation pacemaker channels (HCN). The sequence is that of Gamma-conotoxin-like TeA53 from Conus textile (Cloth-of-gold cone).